Consider the following 140-residue polypeptide: uncharacterized protein (140 aa).

The tract at residues 34–88 (PLRWRNRARNREKPHSPRAVSSPATHSLPPSNPCRLTPTLSSARPREGSCPSKCS) is disordered.

As to expression, expressed in a range of cell lines, including B-cell lymphoma and prostate.

This is an uncharacterized protein from Homo sapiens (Human).